Reading from the N-terminus, the 503-residue chain is ATP synthase subunit alpha (503 aa).

ATP is bound at residue Gly170–Thr177.

This sequence belongs to the ATPase alpha/beta chains family. As to quaternary structure, F-type ATPases have 2 components, CF(1) - the catalytic core - and CF(0) - the membrane proton channel. CF(1) has five subunits: alpha(3), beta(3), gamma(1), delta(1), epsilon(1). CF(0) has four main subunits: a, b, b' and c.

Its subcellular location is the cellular thylakoid membrane. The catalysed reaction is ATP + H2O + 4 H(+)(in) = ADP + phosphate + 5 H(+)(out). Its function is as follows. Produces ATP from ADP in the presence of a proton gradient across the membrane. The alpha chain is a regulatory subunit. The protein is ATP synthase subunit alpha of Gloeothece citriformis (strain PCC 7424) (Cyanothece sp. (strain PCC 7424)).